The chain runs to 370 residues: Nematocyst expressed protein 4 (370 aa).

A signal peptide spans 1–19 (MAWTLVLLVLLGTSSCLDA). The interval 34 to 55 (SGSGSGEEGSSGSGSAPEPVRD) is disordered. The segment covering 36 to 45 (SGSGEEGSSG) has biased composition (gly residues). ShKT domains are found at residues 70-102 (CLDK…CRFC), 113-149 (CTDA…CKLC), and 155-190 (GKKF…CEVH). Intrachain disulfides connect C70-C102, C77-C95, C84-C99, C113-C149, C121-C142, C131-C146, C164-C183, and C173-C187. The span at 306-340 (PYPPPPPPYPEQVPPPPPPPPPPPPPPPYPYPYPY) shows a compositional bias: pro residues. The tract at residues 306–370 (PYPPPPPPYP…HHKENHSKKS (65 aa)) is disordered. The span at 349-370 (HKSKKHAKHHEKHHKENHSKKS) shows a compositional bias: basic residues.

Belongs to the NEP3 family. In terms of tissue distribution, nematocytes. In late planulae, transcripts are found throughout the ectoderm in nematocytes, with high concentration of expressing cells in the oral pole. In primary polyps, is expressed in nematocytes in the body wall and physa ectoderm and in the upper and lower pharynx.

It localises to the nematocyst. The protein localises to the secreted. This chain is Nematocyst expressed protein 4, found in Nematostella vectensis (Starlet sea anemone).